We begin with the raw amino-acid sequence, 134 residues long: uncharacterized protein (134 aa).

The helical transmembrane segment at phenylalanine 13 to leucine 35 threads the bilayer.

The protein localises to the membrane. This is an uncharacterized protein from Archaeoglobus fulgidus (strain ATCC 49558 / DSM 4304 / JCM 9628 / NBRC 100126 / VC-16).